The sequence spans 543 residues: Serendipity locus protein alpha (543 aa).

The protein resides in the cytoplasm. The protein localises to the cell membrane. Its function is as follows. Required for the cellularization of the syncytial blastoderm embryo. Involved in the localization of the actin filaments just prior to and during plasma membrane invagination. Sry-alpha together with nullo and bnk may provide auxiliary functions, by acting both to stabilize a large and dynamic microfilament structure and regulate its functions. This Drosophila subobscura (Fruit fly) protein is Serendipity locus protein alpha (Sry-alpha).